The following is a 150-amino-acid chain: 3-dehydroquinate dehydratase (150 aa).

Catalysis depends on Tyr23, which acts as the Proton acceptor. 3 residues coordinate substrate: Asn75, His81, and Asp88. His101 serves as the catalytic Proton donor. Residues 102-103 (LS) and Arg112 contribute to the substrate site.

This sequence belongs to the type-II 3-dehydroquinase family. As to quaternary structure, homododecamer.

The catalysed reaction is 3-dehydroquinate = 3-dehydroshikimate + H2O. It participates in metabolic intermediate biosynthesis; chorismate biosynthesis; chorismate from D-erythrose 4-phosphate and phosphoenolpyruvate: step 3/7. Catalyzes a trans-dehydration via an enolate intermediate. The sequence is that of 3-dehydroquinate dehydratase from Pseudomonas savastanoi pv. phaseolicola (strain 1448A / Race 6) (Pseudomonas syringae pv. phaseolicola (strain 1448A / Race 6)).